The following is a 144-amino-acid chain: Ribosome association toxin RatA (144 aa).

It belongs to the ribosome association toxin RatA family.

Its function is as follows. Toxic component of a type II toxin-antitoxin (TA) system. Binds to 50S ribosomal subunits, preventing them from associating with 30S subunits to form 70S ribosomes. Its antitoxin is unknown. The sequence is that of Ribosome association toxin RatA (ratA) from Pseudomonas aeruginosa (strain ATCC 15692 / DSM 22644 / CIP 104116 / JCM 14847 / LMG 12228 / 1C / PRS 101 / PAO1).